The primary structure comprises 341 residues: Tetraacyldisaccharide 4'-kinase (341 aa).

54–61 (TVGGAGKT) contacts ATP.

The protein belongs to the LpxK family.

The enzyme catalyses a lipid A disaccharide + ATP = a lipid IVA + ADP + H(+). It participates in glycolipid biosynthesis; lipid IV(A) biosynthesis; lipid IV(A) from (3R)-3-hydroxytetradecanoyl-[acyl-carrier-protein] and UDP-N-acetyl-alpha-D-glucosamine: step 6/6. Its function is as follows. Transfers the gamma-phosphate of ATP to the 4'-position of a tetraacyldisaccharide 1-phosphate intermediate (termed DS-1-P) to form tetraacyldisaccharide 1,4'-bis-phosphate (lipid IVA). The protein is Tetraacyldisaccharide 4'-kinase of Brucella ovis (strain ATCC 25840 / 63/290 / NCTC 10512).